Consider the following 24-residue polypeptide: Humanin-like 6 (24 aa).

The protein belongs to the humanin family. In terms of tissue distribution, expressed in skeletal muscle and testis.

Its subcellular location is the secreted. It localises to the cytoplasm. Its function is as follows. Plays a role as a neuroprotective and antiapoptotic factor. The chain is Humanin-like 6 from Homo sapiens (Human).